The sequence spans 218 residues: Adenylate kinase (218 aa).

10–15 contacts ATP; that stretch reads GAGKGT. Positions 30–59 are NMP; the sequence is STGDMLRAAVKAGSEMGLKAKAVMDAGQLV. AMP-binding positions include Thr31, Arg36, 57 to 59, 85 to 88, and Gln92; these read QLV and GFPR. Residues 122 to 159 are LID; that stretch reads GRRVHEASGRTYHLVYNPPKVEGKDDVTGEDLVQRADD. Residues Arg123 and 132 to 133 each bind ATP; that span reads TY. 2 residues coordinate AMP: Arg156 and Arg167. Gly203 provides a ligand contact to ATP.

It belongs to the adenylate kinase family. In terms of assembly, monomer.

It is found in the cytoplasm. The catalysed reaction is AMP + ATP = 2 ADP. The protein operates within purine metabolism; AMP biosynthesis via salvage pathway; AMP from ADP: step 1/1. Catalyzes the reversible transfer of the terminal phosphate group between ATP and AMP. Plays an important role in cellular energy homeostasis and in adenine nucleotide metabolism. The protein is Adenylate kinase of Marinomonas sp. (strain MWYL1).